The chain runs to 491 residues: 3-phosphoinositide-dependent protein kinase 1 (491 aa).

Positions 44 to 311 constitute a Protein kinase domain; sequence FEFGKIYGVG…YVALKRHPFF (268 aa). Residues 54 to 56 and lysine 73 each bind ATP; that span reads SYS. The segment at 75-119 is PIF-pocket; it reads MDKKFITKENKTAYVKLERIVLDQLEHPGIIKLYFTFQDTSSLYM. The segment at 77-112 is PIF-binding; the sequence is KKFITKENKTAYVKLERIVLDQLEHPGIIKLYFTFQ. ATP contacts are provided by residues 122–124 and glutamate 128; that span reads ESC. The active-site Proton acceptor is aspartate 167. ATP is bound at residue glutamate 171. Position 177 is a phosphoserine (serine 177). Aspartate 185 contributes to the ATP binding site. An activation loop region spans residues 185-222; sequence DFGSVKPMQDSQITVLPNAASDDKACTFVGTAAYVPPE. Phosphothreonine; by autocatalysis is present on threonine 211. Residues serine 276 and serine 337 each carry the phosphoserine modification. Positions 321-377 are disordered; sequence SQTPPKLAPDPASQTASPERDDTHGSPWNLTHIGDSLATQNEGHSAPPTSSESSGSI. Positions 365-376 are enriched in low complexity; it reads SAPPTSSESSGS. Serine 382 carries the phosphoserine modification. One can recognise a PH domain in the interval 386–491; sequence FDSRWQQFLE…KKAIETLQNR (106 aa).

It belongs to the protein kinase superfamily. AGC Ser/Thr protein kinase family. PDPK1 subfamily. As to quaternary structure, interacts with AGC1-5 and AGC1-7. Interacts with the C-terminal PIF domain of the protein kinases D6PK/AGC1-1, OXI1/AGC2-1 and PID. In terms of processing, phosphorylation on Thr-211 in the activation loop is required for full activity. PDK1 itself can autophosphorylate Thr-211, leading to its own activation. In terms of tissue distribution, ubiquitous.

Its subcellular location is the cytoplasm. The protein localises to the membrane. It catalyses the reaction L-seryl-[protein] + ATP = O-phospho-L-seryl-[protein] + ADP + H(+). The enzyme catalyses L-threonyl-[protein] + ATP = O-phospho-L-threonyl-[protein] + ADP + H(+). Activated by phosphatidic acid (PA) and in response to the fungal elicitor xylanase. Its function is as follows. May couple lipid signals to the activation-loop phosphorylation of several protein kinases of the so-called AGC kinase family. Interacts via its pleckstrin homology domain with phosphatidic acid, PtdIns3P and PtdIns(3,4)P2 and to a lesser extent with PtdIns(4,5)P2 and PtdIns4P. May play a general role in signaling processes controlling the pathogen/stress response, polar auxin transport and development. Transphosphorylates the AGC protein kinases OXI1/AGC2-1, PK1/S6K1, PK19/S6K2 and PID resulting in their activation. This chain is 3-phosphoinositide-dependent protein kinase 1 (PDPK1), found in Arabidopsis thaliana (Mouse-ear cress).